The following is a 451-amino-acid chain: Tryptophan--tRNA ligase (451 aa).

Residues 10–12 (TTT) and 18–19 (GN) contribute to the ATP site. The 'HIGH' region motif lies at 11-19 (TTGTPHLGN). Asp143 contacts L-tryptophan. ATP contacts are provided by residues 155-157 (GRD), Leu195, and 202-206 (KMSKS). A 'KMSKS' region motif is present at residues 202–206 (KMSKS).

This sequence belongs to the class-I aminoacyl-tRNA synthetase family. As to quaternary structure, homodimer.

It is found in the cytoplasm. The catalysed reaction is tRNA(Trp) + L-tryptophan + ATP = L-tryptophyl-tRNA(Trp) + AMP + diphosphate + H(+). Catalyzes the attachment of tryptophan to tRNA(Trp). The polypeptide is Tryptophan--tRNA ligase (Bordetella pertussis (strain Tohama I / ATCC BAA-589 / NCTC 13251)).